The primary structure comprises 481 residues: Probable glycine dehydrogenase (decarboxylating) subunit 2 (481 aa).

Residues 1–26 are disordered; that stretch reads MVIFEKTRGKNSPSVMPSKKGDVSNI. N6-(pyridoxal phosphate)lysine is present on Lys263.

It belongs to the GcvP family. C-terminal subunit subfamily. The glycine cleavage system is composed of four proteins: P, T, L and H. In this organism, the P 'protein' is a heterodimer of two subunits. Pyridoxal 5'-phosphate serves as cofactor.

The enzyme catalyses N(6)-[(R)-lipoyl]-L-lysyl-[glycine-cleavage complex H protein] + glycine + H(+) = N(6)-[(R)-S(8)-aminomethyldihydrolipoyl]-L-lysyl-[glycine-cleavage complex H protein] + CO2. The glycine cleavage system catalyzes the degradation of glycine. The P protein binds the alpha-amino group of glycine through its pyridoxal phosphate cofactor; CO(2) is released and the remaining methylamine moiety is then transferred to the lipoamide cofactor of the H protein. This chain is Probable glycine dehydrogenase (decarboxylating) subunit 2, found in Francisella tularensis subsp. mediasiatica (strain FSC147).